The chain runs to 475 residues: Probable 5'-adenylylsulfate reductase 1, chloroplastic (475 aa).

The transit peptide at 1 to 63 (MASATASISS…AAEPARQPVS (63 aa)) directs the protein to the chloroplast. The tract at residues 72–327 (AAPVAEDAAA…KAKECGLHKG (256 aa)) is reductase domain. The Thioredoxin domain occupies 341-475 (HKAGGANGNG…SLLAFVNSLR (135 aa)). Catalysis depends on nucleophile residues Cys393 and Cys396. Cys393 and Cys396 form a disulfide bridge.

Belongs to the APS reductase family. The cofactor is [4Fe-4S] cluster.

It is found in the plastid. The protein resides in the chloroplast. The enzyme catalyses glutathione disulfide + sulfite + AMP + 2 H(+) = adenosine 5'-phosphosulfate + 2 glutathione. Reduces sulfate for Cys biosynthesis. The protein is Probable 5'-adenylylsulfate reductase 1, chloroplastic (APR1) of Oryza sativa subsp. japonica (Rice).